The primary structure comprises 262 residues: 2-keto-4-pentenoate hydratase 2 (262 aa).

The protein belongs to the hydratase/decarboxylase family. MhpD subfamily. A divalent metal cation is required as a cofactor.

It catalyses the reaction (S)-4-hydroxy-2-oxopentanoate = (2Z)-2-hydroxypenta-2,4-dienoate + H2O. The protein operates within aromatic compound metabolism; 3-phenylpropanoate degradation. Functionally, catalyzes the conversion of 2-hydroxypentadienoic acid (enolic form of 2-oxopent-4-enoate) to 4-hydroxy-2-ketopentanoic acid. The protein is 2-keto-4-pentenoate hydratase 2 of Dechloromonas aromatica (strain RCB).